The following is a 291-amino-acid chain: 4-hydroxy-tetrahydrodipicolinate synthase (291 aa).

Thr-44 provides a ligand contact to pyruvate. Tyr-132 serves as the catalytic Proton donor/acceptor. Lys-161 functions as the Schiff-base intermediate with substrate in the catalytic mechanism. Ile-202 serves as a coordination point for pyruvate.

Belongs to the DapA family. As to quaternary structure, homotetramer; dimer of dimers.

The protein localises to the cytoplasm. The enzyme catalyses L-aspartate 4-semialdehyde + pyruvate = (2S,4S)-4-hydroxy-2,3,4,5-tetrahydrodipicolinate + H2O + H(+). Its pathway is amino-acid biosynthesis; L-lysine biosynthesis via DAP pathway; (S)-tetrahydrodipicolinate from L-aspartate: step 3/4. Catalyzes the condensation of (S)-aspartate-beta-semialdehyde [(S)-ASA] and pyruvate to 4-hydroxy-tetrahydrodipicolinate (HTPA). This chain is 4-hydroxy-tetrahydrodipicolinate synthase, found in Endomicrobium trichonymphae.